Consider the following 529-residue polypeptide: Glucose-6-phosphate isomerase (529 aa).

The active-site Proton donor is E323. Catalysis depends on residues H352 and K456.

The protein belongs to the GPI family.

The protein resides in the cytoplasm. The catalysed reaction is alpha-D-glucose 6-phosphate = beta-D-fructose 6-phosphate. It functions in the pathway carbohydrate biosynthesis; gluconeogenesis. It participates in carbohydrate degradation; glycolysis; D-glyceraldehyde 3-phosphate and glycerone phosphate from D-glucose: step 2/4. Catalyzes the reversible isomerization of glucose-6-phosphate to fructose-6-phosphate. The chain is Glucose-6-phosphate isomerase from Geobacter sulfurreducens (strain ATCC 51573 / DSM 12127 / PCA).